Consider the following 226-residue polypeptide: Flagellar L-ring protein (226 aa).

The first 15 residues, 1–15 (MRILGLSAALLILGG), serve as a signal peptide directing secretion. A lipid anchor (N-palmitoyl cysteine) is attached at Cys-16. Residue Cys-16 is the site of S-diacylglycerol cysteine attachment.

It belongs to the FlgH family. In terms of assembly, the basal body constitutes a major portion of the flagellar organelle and consists of four rings (L,P,S, and M) mounted on a central rod.

It localises to the cell outer membrane. The protein resides in the bacterial flagellum basal body. Assembles around the rod to form the L-ring and probably protects the motor/basal body from shearing forces during rotation. The protein is Flagellar L-ring protein of Alteromonas mediterranea (strain DSM 17117 / CIP 110805 / LMG 28347 / Deep ecotype).